The chain runs to 140 residues: Beta/delta-urticatoxin-De2a (140 aa).

Residues 1-18 (MKTSTALVLLLALTATSA) form the signal peptide. Positions 19-78 (SSGDHQFIDEQNIMNVAEGKNVISSLSSSGGGDDAAAIMESVLVNGGNRKMVFMMVSGSQ) are excised as a propeptide. Disulfide bonds link Cys-81–Cys-95, Cys-88–Cys-100, Cys-94–Cys-108, Cys-113–Cys-127, Cys-120–Cys-131, and Cys-126–Cys-139.

This sequence belongs to the urticatoxin-2 family. As to expression, expressed in trichomes, that are stiff epidermal hairs located on the surface of petioles and leaves.

The protein localises to the secreted. In terms of biological role, plant defense neurotoxin that causes pain and systemic symptoms in mammals via modulation of voltage-gated sodium channels (Nav). Potent modulator of human Nav1.5/SCN5A (EC(50)=55 nM), Nav1.6/SCN8A (EC(50)=0.86 nM), and Nav1.7/SCN9A (EC(50)=208 nM), where it shifts the activation threshold to more negative potentials and delays fast inactivation. Also shifts the voltage-dependence of steady-state fast inactivation of Nav1.6/SCN8A, but not that of Nav1.5/SCN5A or Nav1.7/SCN9A. On Nav1.7/SCN9A, principally acts by binding to extracellular loops of domain IV (Nav site 3). In vivo, intraplantar injection into mice causes numerous dose-dependent, immediate, and long-lasting spontaneous pain behaviors, while no swelling is observed in the injected paw. At the highest doses tested, systemic symptoms including hypokinesia and hypersalivation are observed. This is Beta/delta-urticatoxin-De2a from Dendrocnide excelsa (Giant stinging tree).